A 232-amino-acid polypeptide reads, in one-letter code: Octanoyltransferase (232 aa).

Residues 44-219 (EHTGDELWVV…QLARQFGLVL (176 aa)) form the BPL/LPL catalytic domain. Residues 83 to 90 (RGGQVTYH), 150 to 152 (ALG), and 163 to 165 (GLS) each bind substrate. Cys-181 acts as the Acyl-thioester intermediate in catalysis.

It belongs to the LipB family.

The protein localises to the cytoplasm. It carries out the reaction octanoyl-[ACP] + L-lysyl-[protein] = N(6)-octanoyl-L-lysyl-[protein] + holo-[ACP] + H(+). It functions in the pathway protein modification; protein lipoylation via endogenous pathway; protein N(6)-(lipoyl)lysine from octanoyl-[acyl-carrier-protein]: step 1/2. Catalyzes the transfer of endogenously produced octanoic acid from octanoyl-acyl-carrier-protein onto the lipoyl domains of lipoate-dependent enzymes. Lipoyl-ACP can also act as a substrate although octanoyl-ACP is likely to be the physiological substrate. The polypeptide is Octanoyltransferase (Xanthomonas campestris pv. campestris (strain B100)).